Here is a 185-residue protein sequence, read N- to C-terminus: Ribosome-recycling factor (185 aa).

This sequence belongs to the RRF family.

It is found in the cytoplasm. Its function is as follows. Responsible for the release of ribosomes from messenger RNA at the termination of protein biosynthesis. May increase the efficiency of translation by recycling ribosomes from one round of translation to another. This Salinispora arenicola (strain CNS-205) protein is Ribosome-recycling factor.